A 285-amino-acid chain; its full sequence is Probable endonuclease 4 (285 aa).

Positions 69, 109, 145, 179, 182, 216, 229, 231, and 261 each coordinate Zn(2+).

This sequence belongs to the AP endonuclease 2 family. Requires Zn(2+) as cofactor.

The enzyme catalyses Endonucleolytic cleavage to 5'-phosphooligonucleotide end-products.. Endonuclease IV plays a role in DNA repair. It cleaves phosphodiester bonds at apurinic or apyrimidinic (AP) sites, generating a 3'-hydroxyl group and a 5'-terminal sugar phosphate. The sequence is that of Probable endonuclease 4 from Salmonella arizonae (strain ATCC BAA-731 / CDC346-86 / RSK2980).